The primary structure comprises 496 residues: Cytochrome P450 71B14 (496 aa).

A helical membrane pass occupies residues 1–21 (MIWWFIVGASFFFAFILIAKD). Heme is bound at residue Cys436.

It belongs to the cytochrome P450 family. Requires heme as cofactor.

The protein localises to the membrane. The protein is Cytochrome P450 71B14 (CYP71B14) of Arabidopsis thaliana (Mouse-ear cress).